Reading from the N-terminus, the 291-residue chain is ATP phosphoribosyltransferase (291 aa).

It belongs to the ATP phosphoribosyltransferase family. Long subfamily. Mg(2+) serves as cofactor.

The protein resides in the cytoplasm. It carries out the reaction 1-(5-phospho-beta-D-ribosyl)-ATP + diphosphate = 5-phospho-alpha-D-ribose 1-diphosphate + ATP. Its pathway is amino-acid biosynthesis; L-histidine biosynthesis; L-histidine from 5-phospho-alpha-D-ribose 1-diphosphate: step 1/9. With respect to regulation, feedback inhibited by histidine. Its function is as follows. Catalyzes the condensation of ATP and 5-phosphoribose 1-diphosphate to form N'-(5'-phosphoribosyl)-ATP (PR-ATP). Has a crucial role in the pathway because the rate of histidine biosynthesis seems to be controlled primarily by regulation of HisG enzymatic activity. This is ATP phosphoribosyltransferase from Trichlorobacter lovleyi (strain ATCC BAA-1151 / DSM 17278 / SZ) (Geobacter lovleyi).